The sequence spans 106 residues: ATP-dependent Clp protease adapter protein ClpS (106 aa).

Over residues 1–14 the composition is skewed to basic and acidic residues; that stretch reads MTDKAGDWQEHGPQ. The tract at residues 1-21 is disordered; that stretch reads MTDKAGDWQEHGPQVEEAPPQ.

Belongs to the ClpS family. As to quaternary structure, binds to the N-terminal domain of the chaperone ClpA.

In terms of biological role, involved in the modulation of the specificity of the ClpAP-mediated ATP-dependent protein degradation. This is ATP-dependent Clp protease adapter protein ClpS from Alkalilimnicola ehrlichii (strain ATCC BAA-1101 / DSM 17681 / MLHE-1).